The sequence spans 237 residues: MKKITLALSAVCLLFTLNHSANALVSSPSTLNPGTNVAKLAEQAPVHWVSVAQIENSLTGRPPMAVGFDIDDTVLFSSPGFWRGKKTYSPDSDDYLKNPAFWEKMNNGWDEFSIPKEVARQLIDMHVRRGDSIYFVTGRSQTKTETVSKTLADNFHIPAANMNPVIFAGDKPEQNTKVQWLQEKNMRIFYGDSDNDITAARDCGIRGIRILRAANSTYKPLPQAGAFGEEVIVNSEY.

Residues 1 to 23 form the signal peptide; sequence MKKITLALSAVCLLFTLNHSANA. The active-site Nucleophile is aspartate 69. Mg(2+) is bound by residues aspartate 69 and aspartate 71. The Proton donor role is filled by aspartate 71. Substrate is bound by residues 137–138 and lysine 177; that span reads TG. Aspartate 192 lines the Mg(2+) pocket.

It belongs to the class B bacterial acid phosphatase family. Homotetramer. The cofactor is Mg(2+).

The protein localises to the periplasm. The enzyme catalyses a phosphate monoester + H2O = an alcohol + phosphate. Its activity is regulated as follows. Nucleosides, and particularly 2'-deoxyribonucleosides, are potent inhibitors of the phosphatase activity. The phosphatase activity is also inhibited by inorganic phosphate and EDTA in vitro. In terms of biological role, dephosphorylates several organic phosphate monoesters such as 3'-UMP, 5'-UMP and pNPP. Also has a phosphotransferase activity catalyzing the transfer of low-energy phosphate groups from organic phosphate monoesters to free hydroxyl groups of various organic compounds such as the 2'-, 3-, or 5'-hydroxyls of nucleosides and nucleotides. Also displays significant phosphomutase activity since it is able to catalyze the transfer of the phosphate group of 3'-AMP from the 3'-position both to the 2'- and 5'-positions. One of the physiological functions of the phosphohydrolytic activity of the enzyme is believed to be the scavenging of organic phosphate esters that otherwise cannot pass the cytoplasmic membrane. The sequence is that of Class B acid phosphatase (aphA) from Salmonella typhimurium (strain LT2 / SGSC1412 / ATCC 700720).